The following is a 128-amino-acid chain: NADH dehydrogenase [ubiquinone] 1 beta subcomplex subunit 6 (128 aa).

Ser2 is subject to N-acetylserine. N6-acetyllysine is present on Lys24. The chain crosses the membrane as a helical span at residues 64-86 (AYRSSLFAVSHVLIPMWFVHYYV).

This sequence belongs to the complex I NDUFB6 subunit family. Complex I is composed of 45 different subunits.

The protein localises to the mitochondrion inner membrane. In terms of biological role, accessory subunit of the mitochondrial membrane respiratory chain NADH dehydrogenase (Complex I), that is believed not to be involved in catalysis. Complex I functions in the transfer of electrons from NADH to the respiratory chain. The immediate electron acceptor for the enzyme is believed to be ubiquinone. The polypeptide is NADH dehydrogenase [ubiquinone] 1 beta subcomplex subunit 6 (Ndufb6) (Mus musculus (Mouse)).